The following is a 201-amino-acid chain: MEKFTTLEGVAAPMRIINIDTDRIIPKQYLKTIKRTGLGQGLFSEMRYNDDGSEYPDFVLNQPAYRHAKTLVVGDNFGCGSSREHAPWALADFGIRCVISTSFADIFFNNCAKNGILAIVVSPEDLEKLFQDAERGANATLTIDLAAQTIKGPDGGTLHFDIDEGRKHNLLNGLDEIGLTLDQKAPAIDAYEAKLAQREWA.

This sequence belongs to the LeuD family. LeuD type 1 subfamily. Heterodimer of LeuC and LeuD.

The enzyme catalyses (2R,3S)-3-isopropylmalate = (2S)-2-isopropylmalate. Its pathway is amino-acid biosynthesis; L-leucine biosynthesis; L-leucine from 3-methyl-2-oxobutanoate: step 2/4. In terms of biological role, catalyzes the isomerization between 2-isopropylmalate and 3-isopropylmalate, via the formation of 2-isopropylmaleate. This is 3-isopropylmalate dehydratase small subunit from Methylorubrum extorquens (strain ATCC 14718 / DSM 1338 / JCM 2805 / NCIMB 9133 / AM1) (Methylobacterium extorquens).